We begin with the raw amino-acid sequence, 610 residues long: Putative protein tag-250 (610 aa).

Tudor domains lie at 149–260 and 386–506; these read VALK…LLPP and MPMS…KIGG.

The polypeptide is Putative protein tag-250 (tag-250) (Caenorhabditis elegans).